Reading from the N-terminus, the 691-residue chain is Elongation factor G (691 aa).

The 275-residue stretch at 8 to 282 (EQTRNIGIMA…AVIDYLPAPT (275 aa)) folds into the tr-type G domain. Residues 17-24 (AHIDAGKT), 81-85 (DTPGH), and 135-138 (NKMD) each bind GTP.

Belongs to the TRAFAC class translation factor GTPase superfamily. Classic translation factor GTPase family. EF-G/EF-2 subfamily.

The protein resides in the cytoplasm. Its function is as follows. Catalyzes the GTP-dependent ribosomal translocation step during translation elongation. During this step, the ribosome changes from the pre-translocational (PRE) to the post-translocational (POST) state as the newly formed A-site-bound peptidyl-tRNA and P-site-bound deacylated tRNA move to the P and E sites, respectively. Catalyzes the coordinated movement of the two tRNA molecules, the mRNA and conformational changes in the ribosome. The polypeptide is Elongation factor G (Natranaerobius thermophilus (strain ATCC BAA-1301 / DSM 18059 / JW/NM-WN-LF)).